We begin with the raw amino-acid sequence, 245 residues long: Probable septum site-determining protein MinC (245 aa).

Over residues 113–132 the composition is skewed to basic and acidic residues; the sequence is RERPLEPLVGEEKKKPEKPP. The tract at residues 113-138 is disordered; the sequence is RERPLEPLVGEEKKKPEKPPEPTIKP.

Belongs to the MinC family. Interacts with MinD and FtsZ.

Cell division inhibitor that blocks the formation of polar Z ring septums. Rapidly oscillates between the poles of the cell to destabilize FtsZ filaments that have formed before they mature into polar Z rings. Prevents FtsZ polymerization. This chain is Probable septum site-determining protein MinC, found in Pseudomonas fluorescens (strain SBW25).